We begin with the raw amino-acid sequence, 779 residues long: Probable ATP-dependent RNA helicase DHX40 (779 aa).

The disordered stretch occupies residues Met-1–Phe-53. Basic and acidic residues predominate over residues Arg-13 to Gly-41. The span at Cys-42–Phe-53 shows a compositional bias: polar residues. A Helicase ATP-binding domain is found at Ile-63–Pro-231. Gly-76–Thr-83 lines the ATP pocket. A DEAH box motif is present at residues Asp-173–His-176. The Helicase C-terminal domain occupies Thr-263–Ala-442.

This sequence belongs to the DEAD box helicase family. DEAH subfamily.

The enzyme catalyses ATP + H2O = ADP + phosphate + H(+). In terms of biological role, probable ATP-dependent RNA helicase. This Rattus norvegicus (Rat) protein is Probable ATP-dependent RNA helicase DHX40 (Dhx40).